The primary structure comprises 146 residues: Hemoglobin subunit beta (146 aa).

A Globin domain is found at 2-146; the sequence is HWTADEKQLI…VAHALALGYH (145 aa). 2 residues coordinate heme b: H63 and H92.

It belongs to the globin family. As to quaternary structure, heterotetramer of two alpha chains and two beta chains. As to expression, red blood cells.

In terms of biological role, involved in oxygen transport from the lung to the various peripheral tissues. The sequence is that of Hemoglobin subunit beta (HBB) from Chrysemys picta bellii (Western painted turtle).